The following is a 147-amino-acid chain: Cytochrome c-type biogenesis protein CcmE 1 (147 aa).

Residues 1-9 (MKSLKKQRR) are Cytoplasmic-facing. The chain crosses the membrane as a helical; Signal-anchor for type II membrane protein span at residues 10–30 (IQVIILATVALVLATGLIGYA). The Periplasmic portion of the chain corresponds to 31–147 (MRDGINFFRA…EQGVYQAPES (117 aa)). Heme-binding residues include His123 and Tyr127.

Belongs to the CcmE/CycJ family.

It localises to the cell inner membrane. Heme chaperone required for the biogenesis of c-type cytochromes. Transiently binds heme delivered by CcmC and transfers the heme to apo-cytochromes in a process facilitated by CcmF and CcmH. This chain is Cytochrome c-type biogenesis protein CcmE 1, found in Ruegeria pomeroyi (strain ATCC 700808 / DSM 15171 / DSS-3) (Silicibacter pomeroyi).